The primary structure comprises 729 residues: Methionine--tRNA ligase (729 aa).

Positions 12–22 (PYVNNIPHLGN) match the 'HIGH' region motif. Positions 143, 146, 155, and 158 each coordinate Zn(2+). A 'KMSKS' region motif is present at residues 330-334 (KFSKS). Lys-333 is an ATP binding site. The tRNA-binding domain occupies 565-670 (FSEQVCLKVV…DNPIPGERII (106 aa)).

The protein belongs to the class-I aminoacyl-tRNA synthetase family. MetG type 1 subfamily. Homodimer. Requires Zn(2+) as cofactor.

Its subcellular location is the cytoplasm. The enzyme catalyses tRNA(Met) + L-methionine + ATP = L-methionyl-tRNA(Met) + AMP + diphosphate. In terms of biological role, is required not only for elongation of protein synthesis but also for the initiation of all mRNA translation through initiator tRNA(fMet) aminoacylation. This Borrelia hermsii (strain HS1 / DAH) protein is Methionine--tRNA ligase.